We begin with the raw amino-acid sequence, 84 residues long: Cell division topological specificity factor (84 aa).

This sequence belongs to the MinE family.

Functionally, prevents the cell division inhibition by proteins MinC and MinD at internal division sites while permitting inhibition at polar sites. This ensures cell division at the proper site by restricting the formation of a division septum at the midpoint of the long axis of the cell. This Rhodopseudomonas palustris (strain BisA53) protein is Cell division topological specificity factor.